The primary structure comprises 186 residues: Der GTPase-activating protein YihI (186 aa).

Positions L39–D77 are disordered. The segment covering S62 to D77 has biased composition (basic and acidic residues).

It belongs to the YihI family. As to quaternary structure, interacts with Der.

Its function is as follows. A GTPase-activating protein (GAP) that modifies Der/EngA GTPase function. May play a role in ribosome biogenesis. The sequence is that of Der GTPase-activating protein YihI from Haemophilus influenzae (strain 86-028NP).